The sequence spans 931 residues: Chitin synthase III (931 aa).

Residues N37 and N94 are each glycosylated (N-linked (GlcNAc...) asparagine). The interval 93–154 is disordered; that stretch reads PNASQLPPAG…PGGVGQAGGL (62 aa). Gly residues predominate over residues 102 to 122; sequence GSGGFGDNGFGQYGQPQGFGG. N558 is a glycosylation site (N-linked (GlcNAc...) asparagine). The next 5 helical transmembrane spans lie at 585-605, 644-664, 677-697, 731-751, and 759-779; these read FFLHIQVIYNVLNVIFSWFSL, IINALLKYLYLAFVILQFILA, IASFMVFGLIQGYILVLSGYL, VILIALITIYGLYFVASFLYL, and SFPYYMLLMSTYINILMVYAF. N802 carries N-linked (GlcNAc...) asparagine glycosylation. 2 helical membrane-spanning segments follow: residues 858 to 878 and 899 to 919; these read TGLVVSWLFSNILLVVIITSD and FLLYATAALSIVRFIGFLWFL.

It belongs to the chitin synthase family. Class III subfamily. As to expression, highly expressed in conidia and during appressorium formation.

The protein localises to the cell membrane. The catalysed reaction is [(1-&gt;4)-N-acetyl-beta-D-glucosaminyl](n) + UDP-N-acetyl-alpha-D-glucosamine = [(1-&gt;4)-N-acetyl-beta-D-glucosaminyl](n+1) + UDP + H(+). Polymerizes chitin, a structural polymer of the cell wall and septum, by transferring the sugar moiety of UDP-GlcNAc to the non-reducing end of the growing chitin polymer. Contributes to the production of conidia and the ability of fungal conidia to germinate. Involved in the fungal cell wall integrity and the ability of conidia to withstand biophysical pressure. Required for appressorium formation and evasion of insect cellular and/or humoral defenses, promoting the fungal dimorphic transition to the production of hyphal bodies that occurs within hosts, and ultimately to virulence. The chain is Chitin synthase III from Metarhizium acridum (strain CQMa 102).